The following is a 434-amino-acid chain: Eukaryotic translation initiation factor 3 subunit E (434 aa).

The PCI domain maps to 219–392; sequence FFNHPKGRDL…GHVVMGTQPL (174 aa).

The protein belongs to the eIF-3 subunit E family. In terms of assembly, component of the eukaryotic translation initiation factor 3 (eIF-3) complex. The eIF-3 complex interacts with pix. Interacts with mxt.

It localises to the cytoplasm. Functionally, component of the eukaryotic translation initiation factor 3 (eIF-3) complex, which is involved in protein synthesis of a specialized repertoire of mRNAs and, together with other initiation factors, stimulates binding of mRNA and methionyl-tRNAi to the 40S ribosome. The eIF-3 complex specifically targets and initiates translation of a subset of mRNAs involved in cell proliferation. The protein is Eukaryotic translation initiation factor 3 subunit E (eIF3-S6) of Drosophila ananassae (Fruit fly).